We begin with the raw amino-acid sequence, 405 residues long: Tryptophan synthase beta chain (405 aa).

At lysine 96 the chain carries N6-(pyridoxal phosphate)lysine.

This sequence belongs to the TrpB family. Tetramer of two alpha and two beta chains. Pyridoxal 5'-phosphate is required as a cofactor.

It carries out the reaction (1S,2R)-1-C-(indol-3-yl)glycerol 3-phosphate + L-serine = D-glyceraldehyde 3-phosphate + L-tryptophan + H2O. It functions in the pathway amino-acid biosynthesis; L-tryptophan biosynthesis; L-tryptophan from chorismate: step 5/5. Functionally, the beta subunit is responsible for the synthesis of L-tryptophan from indole and L-serine. The sequence is that of Tryptophan synthase beta chain from Clostridium botulinum (strain Alaska E43 / Type E3).